The sequence spans 184 residues: Probable RNA 2'-phosphotransferase (184 aa).

Belongs to the KptA/TPT1 family.

In terms of biological role, removes the 2'-phosphate from RNA via an intermediate in which the phosphate is ADP-ribosylated by NAD followed by a presumed transesterification to release the RNA and generate ADP-ribose 1''-2''-cyclic phosphate (APPR&gt;P). May function as an ADP-ribosylase. This chain is Probable RNA 2'-phosphotransferase, found in Escherichia coli O6:K15:H31 (strain 536 / UPEC).